Here is a 259-residue protein sequence, read N- to C-terminus: HTH-type transcriptional regulator Rv1931c (259 aa).

The segment covering 104–121 has biased composition (basic residues); it reads SHRRHRPRAGTGRRRPRH. Residues 104–170 are disordered; that stretch reads SHRRHRPRAG…GAGGHRGRAG (67 aa). Positions 174-257 constitute an HTH araC/xylS-type domain; it reads RIGELAQRAA…GISPDQYRKA (84 aa). 2 consecutive DNA-binding regions (H-T-H motif) follow at residues 176–197 and 224–247; these read GELA…SDEV and VVAI…IRRV.

In terms of biological role, controls the expression of genes important for virulence. The sequence is that of HTH-type transcriptional regulator Rv1931c from Mycobacterium tuberculosis (strain ATCC 25618 / H37Rv).